We begin with the raw amino-acid sequence, 529 residues long: MDPAIILFVFIFVSVCFCLLIFLSAYRVFSGGSERNEYSFLGSEILGSEVPREFLNDEEALNHLASEYDFTHLSPEEQFSYLRGEEFTKTNPPNFHNTRGKSYSNEDDMLLKERGINAFEFEQDADILRGRYIVADKTEINFHNNDTPYSTATSILNYSLPVKNRAYSDTVYFEVKVFEFQNGSENPNGHFAIGLVTKPYPSDFRLPGYNNFSIAYESTGNLKINKPFPTPLQQHQGDNSQYNALVLPPLQQSDIVGFGYVVSTGTLFITRNGKKVMDVMRGCFIDLYPAVGCFSSNAKFQVNLGQLGFVWIEANVRKYGFVSNSDYKKIKGEQGLAALPEYGNSSVAEGDKLLEMGEELPPRYPEDELDFFGRSSKDILKVGSSSKSQNKTKSFSNNEKQDLEEINGEPKVAEEHRSSLITDDPEEVMDLRERLYEQNITGPVSELSSERAPLIGNNESQSEFYVNAKSATSSREGNTETDLKQVTDEEPNSSQELTKAAQNDSNISKTSRTKKKKKNKKNSKKNKKK.

The Cytoplasmic portion of the chain corresponds to 1-2 (MD). Residues 3–23 (PAIILFVFIFVSVCFCLLIFL) traverse the membrane as a helical; Signal-anchor for type II membrane protein segment. At 24–529 (SAYRVFSGGS…KKNSKKNKKK (506 aa)) the chain is on the lumenal side. In terms of domain architecture, B30.2/SPRY spans 101–309 (KSYSNEDDML…FQVNLGQLGF (209 aa)). N-linked (GlcNAc...) asparagine glycosylation is found at N157, N182, N211, N344, N390, N439, and N458. Polar residues predominate over residues 383–398 (GSSSKSQNKTKSFSNN). The tract at residues 383 to 427 (GSSSKSQNKTKSFSNNEKQDLEEINGEPKVAEEHRSSLITDDPEE) is disordered. Residues 440–529 (ITGPVSELSS…KKNSKKNKKK (90 aa)) form a disordered region. Residues 457–476 (NNESQSEFYVNAKSATSSRE) are compositionally biased toward polar residues. Residues 477–487 (GNTETDLKQVT) show a composition bias toward basic and acidic residues. N492, N503, and N506 each carry an N-linked (GlcNAc...) asparagine glycan. Residues 492-504 (NSSQELTKAAQND) are compositionally biased toward polar residues. Positions 511–529 (SRTKKKKKNKKNSKKNKKK) are enriched in basic residues.

The protein belongs to the SSH4 family.

It is found in the vacuole membrane. It localises to the endosome membrane. Functionally, components of the endosome-vacuole trafficking pathway that regulates nutrient transport. May be involved in processes which determine whether plasma membrane proteins are degraded or routed to the plasma membrane. In Debaryomyces hansenii (strain ATCC 36239 / CBS 767 / BCRC 21394 / JCM 1990 / NBRC 0083 / IGC 2968) (Yeast), this protein is Protein SSH4 (SSH4).